We begin with the raw amino-acid sequence, 775 residues long: Tumor necrosis factor alpha-induced protein 3 (775 aa).

Ala-2 bears the N-acetylalanine mark. Residues 58–300 are TRAF-binding; it reads PQFREIIHKA…LTDPENEMKE (243 aa). The OTU domain occupies 92-263; the sequence is LVALKTNGDG…SQHFVPLVTL (172 aa). Asp-100 is an active-site residue. The Nucleophile role is filled by Cys-103. Interaction with ubiquitin regions lie at residues 157 to 159, 190 to 192, and 224 to 227; these read LCY, SLE, and FAPL. His-256 (proton acceptor) is an active-site residue. An interaction with TNIP1 region spans residues 369–775; sequence AQNPLEPSTP…ECYQFKQMYG (407 aa). The A20-type 1 zinc finger occupies 381 to 416; the sequence is SLMDIKCETPNCPFFMSVNTQPLCHECSERRQKNQS. An interaction with RIPK1 region spans residues 386 to 445; the sequence is KCETPNCPFFMSVNTQPLCHECSERRQKNQSKLPKLNSKLGPEGLPGVGLGSSNWSPEET. Zn(2+)-binding residues include Cys-387, Cys-392, Cys-404, and Cys-407. The interval 415 to 455 is disordered; sequence QSKLPKLNSKLGPEGLPGVGLGSSNWSPEETAGGPHSAPPT. The residue at position 451 (Ser-451) is a Phosphoserine. 2 consecutive A20-type zinc fingers follow at residues 464 to 499 and 500 to 533; these read ETTAMKCRSPGCPFTLNVQHNGFCERCHARQINASH and TADPGKCQACLQDVTRTFNGICSTCFKRTTAEPS. The Zn(2+) site is built by Cys-470, Cys-475, Cys-487, Cys-490, Cys-506, Cys-509, Cys-521, and Cys-524. The span at 567 to 580 shows a compositional bias: polar residues; it reads TGNVSPSGCLSQAA. A disordered region spans residues 567–590; it reads TGNVSPSGCLSQAARTPGDRAGTS. 4 consecutive A20-type zinc fingers follow at residues 586-621, 636-671, 695-730, and 741-775; these read RAGTSKCRKAGCMYFGTPENKGFCTLCFIEYRENKQ, FQNNVPCLGRECGTLGSTMFEGYCQKCFIEAQNQRF, VASRLKCARASCKNILACRSEELCMECQHLSQRVGS, and EPPKQRCRAPACDHFGNAKCNGYCNECYQFKQMYG. Positions 590-640 are required for proteasomal degradation of UBE2N and UBE2D3, TRAF6 deubiquitination, and TAX1BP1 interaction with UBE2N; sequence SKCRKAGCMYFGTPENKGFCTLCFIEYRENKQSVTASEKAGSPAPRFQNNV. The sufficient for inhibitory activity of TNF-induced NF-kappa-B activity stretch occupies residues 591–775; the sequence is KCRKAGCMYF…ECYQFKQMYG (185 aa). Zn(2+) is bound by residues Cys-592, Cys-597, Cys-609, Cys-612, Cys-642, Cys-647, Cys-659, Cys-662, Cys-701, Cys-706, Cys-718, Cys-721, Cys-747, Cys-752, Cys-764, and Cys-767. Positions 682-775 are required for lysosomal localization and for TRAF2 lysosomal degradation; it reads RSSQHRDMPR…ECYQFKQMYG (94 aa).

This sequence belongs to the peptidase C64 family. As to quaternary structure, homodimer. Interacts with TNIP1, TAX1BP1 and TRAF2. Interacts with RNF11, ITCH and TAX1BP1 only after TNF stimulation; these interaction are transient and they are lost after 1 hour of stimulation with TNF. Interacts with YWHAZ and YWHAH. Interacts with IKBKG; the interaction is induced by TNF stimulation and by polyubiquitin. Interacts with RIPK1. Interacts with UBE2N; the interaction requires TAX1BP1. Interacts with TRAF6. Found in most tissues during development. Strikingly high levels are found in lymphoid organs, including the thymus, spleen, and gut-associated lymphoid tissue. Constitutively expressed in immature and mature thymocyte subpopulations as well as in resting peripheral T-cells; activation of these leads to down-regulation.

It is found in the cytoplasm. Its subcellular location is the nucleus. It localises to the lysosome. The enzyme catalyses Thiol-dependent hydrolysis of ester, thioester, amide, peptide and isopeptide bonds formed by the C-terminal Gly of ubiquitin (a 76-residue protein attached to proteins as an intracellular targeting signal).. Ubiquitin-editing enzyme that contains both ubiquitin ligase and deubiquitinase activities. Involved in immune and inflammatory responses signaled by cytokines, such as TNF-alpha and IL-1 beta, or pathogens via Toll-like receptors (TLRs) through terminating NF-kappa-B activity. Essential component of a ubiquitin-editing protein complex, comprising also RNF11, ITCH and TAX1BP1, that ensures the transient nature of inflammatory signaling pathways. In cooperation with TAX1BP1 promotes disassembly of E2-E3 ubiquitin protein ligase complexes in IL-1R and TNFR-1 pathways; affected are at least E3 ligases TRAF6, TRAF2 and BIRC2, and E2 ubiquitin-conjugating enzymes UBE2N and UBE2D3. In cooperation with TAX1BP1 promotes ubiquitination of UBE2N and proteasomal degradation of UBE2N and UBE2D3. Upon TNF stimulation, deubiquitinates 'Lys-63'-polyubiquitin chains on RIPK1 and catalyzes the formation of 'Lys-48'-polyubiquitin chains. This leads to RIPK1 proteasomal degradation and consequently termination of the TNF- or LPS-mediated activation of NF-kappa-B. Deubiquitinates TRAF6 probably acting on 'Lys-63'-linked polyubiquitin. Upon T-cell receptor (TCR)-mediated T-cell activation, deubiquitinates 'Lys-63'-polyubiquitin chains on MALT1 thereby mediating disassociation of the CBM (CARD11:BCL10:MALT1) and IKK complexes and preventing sustained IKK activation. Deubiquitinates NEMO/IKBKG; the function is facilitated by TNIP1 and leads to inhibition of NF-kappa-B activation. Upon stimulation by bacterial peptidoglycans, probably deubiquitinates RIPK2. Can also inhibit I-kappa-B-kinase (IKK) through a non-catalytic mechanism which involves polyubiquitin; polyubiquitin promotes association with IKBKG and prevents IKK MAP3K7-mediated phosphorylation. Targets TRAF2 for lysosomal degradation. In vitro able to deubiquitinate 'Lys-11'-, 'Lys-48'- and 'Lys-63' polyubiquitin chains. Inhibitor of programmed cell death. Has a role in the function of the lymphoid system. Required for LPS-induced production of pro-inflammatory cytokines and IFN beta in LPS-tolerized macrophages. The protein is Tumor necrosis factor alpha-induced protein 3 (Tnfaip3) of Mus musculus (Mouse).